Consider the following 756-residue polypeptide: Xylosyl- and glucuronyltransferase LARGE1 (756 aa).

At 1-10 (MLGICRGRRK) the chain is on the cytoplasmic side. Residues 11-31 (FLAASLSLLCIPAITWIYLFS) traverse the membrane as a helical; Signal-anchor for type II membrane protein segment. Residues 32-756 (GSFEDGKPVS…LKYLTAENNS (725 aa)) are Lumenal-facing. Disordered regions lie at residues 43 to 69 (SPLESQAHSPRYTASSQRERESLEVRM) and 81 to 109 (RQLSLAQGRAPSHRRGNHSKTYSMEEGTG). Over residues 44–58 (PLESQAHSPRYTASS) the composition is skewed to polar residues. Positions 53-95 (RYTASSQRERESLEVRMREVEEENRALRRQLSLAQGRAPSHRR) form a coiled coil. Over residues 59-69 (QRERESLEVRM) the composition is skewed to basic and acidic residues. Residues asparagine 97, asparagine 122, and asparagine 148 are each glycosylated (N-linked (GlcNAc...) asparagine). Positions 138 to 413 (IHVAIVCAGY…FLEYDGNLLR (276 aa)) are xylosyltransferase activity. The Mn(2+) site is built by aspartate 242 and aspartate 244. Residue asparagine 272 is glycosylated (N-linked (GlcNAc...) asparagine). Residues 414–756 (RELFGCPSEA…LKYLTAENNS (343 aa)) are glucuronyltransferase activity. Residues aspartate 563 and aspartate 565 each coordinate Mn(2+).

This sequence in the C-terminal section; belongs to the glycosyltransferase 49 family. It in the N-terminal section; belongs to the glycosyltransferase 8 family. Interacts with DAG1 (via the N-terminal domain of alpha-DAG1); the interaction increases binding of DAG1 to laminin. Interacts with B4GAT1. Requires Mn(2+) as cofactor. In terms of tissue distribution, ubiquitous. Highest expression in heart, brain and skeletal muscle.

The protein resides in the golgi apparatus membrane. It carries out the reaction 3-O-[beta-D-GlcA-(1-&gt;3)-beta-D-Xyl-(1-&gt;4)-Rib-ol-P-Rib-ol-P-3-beta-D-GalNAc-(1-&gt;3)-beta-D-GlcNAc-(1-&gt;4)-(O-6-P-alpha-D-Man)]-Thr-[protein] + UDP-alpha-D-xylose = 3-O-[alpha-D-Xyl-(1-&gt;3)-beta-D-GlcA-(1-&gt;4)-beta-D-Xyl-(1-&gt;4)-Rib-ol-P-Rib-ol-P-3-beta-D-GalNAc-(1-&gt;3)-beta-D-GlcNAc-(1-&gt;4)-(O-6-P-alpha-D-Man)]-Thr-[protein] + UDP + H(+). The catalysed reaction is 3-O-{(1-&gt;[3)-alpha-D-Xyl-(1-&gt;3)-beta-D-GlcA-(1-&gt;](n)-4)-beta-D-Xyl-(1-&gt;4)-Rib-ol-P-Rib-ol-P-3-beta-D-GalNAc-(1-&gt;3)-beta-D-GlcNAc-(1-&gt;4)-O-6-P-alpha-D-Man}-L-Thr-[protein] + UDP-alpha-D-glucuronate = 3-O-{beta-D-GlcA-(1-&gt;[3)-alpha-D-Xyl-(1-&gt;3)-beta-D-GlcA-(1-&gt;](n)-4)-beta-D-Xyl-(1-&gt;4)-Rib-ol-P-Rib-ol-P-3-beta-D-GalNAc-(1-&gt;3)-beta-D-GlcNAc-(1-&gt;4)-O-6-P-alpha-D-Man}-L-Thr-[protein] + UDP + H(+). It catalyses the reaction 3-O-{beta-D-GlcA-(1-&gt;[3)-alpha-D-Xyl-(1-&gt;3)-beta-D-GlcA-(1-&gt;](n)-4)-beta-D-Xyl-(1-&gt;4)-Rib-ol-P-Rib-ol-P-3-beta-D-GalNAc-(1-&gt;3)-beta-D-GlcNAc-(1-&gt;4)-O-6-P-alpha-D-Man}-L-Thr-[protein] + UDP-alpha-D-xylose = 3-O-{(1-&gt;[3)-alpha-D-Xyl-(1-&gt;3)-beta-D-GlcA-(1-&gt;](n+1)-4)-beta-D-Xyl-(1-&gt;4)-Rib-ol-P-Rib-ol-P-3-beta-D-GalNAc-(1-&gt;3)-beta-D-GlcNAc-(1-&gt;4)-O-6-P-alpha-D-Man}-L-Thr-[protein] + UDP + H(+). The protein operates within protein modification; protein glycosylation. Bifunctional glycosyltransferase with both alpha-1,3-xylosyltransferase and beta-1,3-glucuronyltransferase activities involved in the maturation of alpha-dystroglycan (DAG1) by glycosylation leading to DAG1 binding to laminin G-like domain-containing extracellular proteins with high affinity. Elongates the glucuronyl-beta-1,4-xylose-beta disaccharide primer structure initiated by B4GAT1 by adding repeating units [-3-Xylose-alpha-1,3-GlcA-beta-1-] to produce a heteropolysaccharide. Requires the phosphorylation of core M3 (O-mannosyl trisaccharide) by POMK to elongate the glucuronyl-beta-1,4-xylose-beta disaccharide primer. Plays a key role in skeletal muscle function and regeneration. This Homo sapiens (Human) protein is Xylosyl- and glucuronyltransferase LARGE1.